The following is a 421-amino-acid chain: Adenylosuccinate synthetase (421 aa).

Residues 11 to 17 and 39 to 41 contribute to the GTP site; these read GDEGKGK and GHT. D12 functions as the Proton acceptor in the catalytic mechanism. Mg(2+) is bound by residues D12 and G39. Residues 12-15, 37-40, T124, R138, Q220, T235, and R299 each bind IMP; these read DEGK and NAGH. H40 (proton donor) is an active-site residue. Position 295–301 (295–301) interacts with substrate; sequence TTTGRPR. GTP is bound by residues R301, 327–329, and 409–411; these read KLD and SVG.

This sequence belongs to the adenylosuccinate synthetase family. Homodimer. The cofactor is Mg(2+).

The protein localises to the cytoplasm. The catalysed reaction is IMP + L-aspartate + GTP = N(6)-(1,2-dicarboxyethyl)-AMP + GDP + phosphate + 2 H(+). It functions in the pathway purine metabolism; AMP biosynthesis via de novo pathway; AMP from IMP: step 1/2. Its function is as follows. Plays an important role in the de novo pathway of purine nucleotide biosynthesis. Catalyzes the first committed step in the biosynthesis of AMP from IMP. The sequence is that of Adenylosuccinate synthetase from Methanothrix thermoacetophila (strain DSM 6194 / JCM 14653 / NBRC 101360 / PT) (Methanosaeta thermophila).